Here is a 218-residue protein sequence, read N- to C-terminus: Protein N-lysine methyltransferase METTL21A (218 aa).

S-adenosyl-L-methionine-binding positions include Trp-47, Gly-73–Gly-75, Asp-94, Trp-125, and Ala-143.

The protein belongs to the methyltransferase superfamily. METTL21 family.

Its subcellular location is the cytoplasm. The enzyme catalyses L-lysyl-[protein] + 3 S-adenosyl-L-methionine = N(6),N(6),N(6)-trimethyl-L-lysyl-[protein] + 3 S-adenosyl-L-homocysteine + 3 H(+). Functionally, protein-lysine methyltransferase that selectively trimethylates residues in heat shock protein 70 (HSP70) family members. This is Protein N-lysine methyltransferase METTL21A (mettl21a) from Danio rerio (Zebrafish).